A 637-amino-acid polypeptide reads, in one-letter code: 3D-(3,5/4)-trihydroxycyclohexane-1,2-dione hydrolase (637 aa).

Glu-66 serves as a coordination point for thiamine diphosphate. The interval Ser-442–Gly-522 is thiamine pyrophosphate binding. Residues Asp-493 and Asn-520 each coordinate Mg(2+).

It belongs to the TPP enzyme family. Mg(2+) serves as cofactor. It depends on thiamine diphosphate as a cofactor.

The enzyme catalyses 3D-3,5/4-trihydroxycyclohexane-1,2-dione + H2O = 5-deoxy-D-glucuronate + H(+). The protein operates within polyol metabolism; myo-inositol degradation into acetyl-CoA; acetyl-CoA from myo-inositol: step 3/7. Functionally, involved in the cleavage of the C1-C2 bond of 3D-(3,5/4)-trihydroxycyclohexane-1,2-dione (THcHDO) to yield 5-deoxy-glucuronate (5DG). The sequence is that of 3D-(3,5/4)-trihydroxycyclohexane-1,2-dione hydrolase from Shouchella clausii (strain KSM-K16) (Alkalihalobacillus clausii).